The chain runs to 101 residues: UPF0235 protein MMP1055 (101 aa).

It belongs to the UPF0235 family.

The polypeptide is UPF0235 protein MMP1055 (Methanococcus maripaludis (strain DSM 14266 / JCM 13030 / NBRC 101832 / S2 / LL)).